Here is a 315-residue protein sequence, read N- to C-terminus: Leucine-rich repeat-containing protein 75B (315 aa).

The disordered stretch occupies residues 1-23; it reads MGARLGRRAGPEAGSEAGAAAGC. Positions 11 to 23 are enriched in low complexity; it reads PEAGSEAGAAAGC. LRR repeat units lie at residues 182 to 195 and 207 to 220; these read LAVL…LSDE and LPRL…GNRL. Residues 284-315 form a disordered region; it reads PEGSAAGATTPASTWDSTAAGLGPEPQACCAR. Positions 286–297 are enriched in low complexity; it reads GSAAGATTPAST.

Belongs to the LRRC75 family.

Its function is as follows. May suppress myogenic differentiation by modulating MYOG expression and Erk1/2 signaling. The polypeptide is Leucine-rich repeat-containing protein 75B (Homo sapiens (Human)).